A 530-amino-acid polypeptide reads, in one-letter code: Ubiquitin carboxyl-terminal hydrolase 17-like protein 19 (530 aa).

The region spanning 80–375 is the USP domain; it reads AGLQNMGNTC…QAYVLFYIQK (296 aa). The active-site Nucleophile is cysteine 89. Catalysis depends on histidine 334, which acts as the Proton acceptor. 2 stretches are compositionally biased toward basic and acidic residues: residues 382-392 and 398-413; these read SESVSRGREPR and DTDRRATQGELKRDHP. Disordered regions lie at residues 382-413 and 476-530; these read SESVSRGREPRALGAEDTDRRATQGELKRDHP and KNHH…LVCQ. The segment covering 484-495 has biased composition (low complexity); it reads SSLLKLSSTTPT. The span at 496–505 shows a compositional bias: polar residues; it reads HQESMNTGTL. Positions 510–524 are enriched in basic residues; the sequence is GRARRSKGKNKHSKR.

Belongs to the peptidase C19 family. USP17 subfamily.

It is found in the nucleus. It localises to the endoplasmic reticulum. It catalyses the reaction Thiol-dependent hydrolysis of ester, thioester, amide, peptide and isopeptide bonds formed by the C-terminal Gly of ubiquitin (a 76-residue protein attached to proteins as an intracellular targeting signal).. In terms of biological role, deubiquitinating enzyme that removes conjugated ubiquitin from specific proteins to regulate different cellular processes that may include cell proliferation, progression through the cell cycle, apoptosis, cell migration, and the cellular response to viral infection. The polypeptide is Ubiquitin carboxyl-terminal hydrolase 17-like protein 19 (USP17L19) (Homo sapiens (Human)).